We begin with the raw amino-acid sequence, 109 residues long: UPF0060 membrane protein PCC8801_1733 (109 aa).

Helical transmembrane passes span 7–27 (LLYFFFTGLCEIGGGYLVWLW), 36–56 (YALLGWGLLMLYGVLPALQTA), 58–78 (FGRVYSAYGGAFVIFSLLWGW), and 87–107 (SYDWLGTLIILIGASVIMYAP).

The protein belongs to the UPF0060 family.

It localises to the cell inner membrane. The sequence is that of UPF0060 membrane protein PCC8801_1733 from Rippkaea orientalis (strain PCC 8801 / RF-1) (Cyanothece sp. (strain PCC 8801)).